A 277-amino-acid chain; its full sequence is Glutamate racemase (277 aa).

Residues D25–S26 and Y57–G58 each bind substrate. The Proton donor/acceptor role is filled by C89. N90–T91 contributes to the substrate binding site. The active-site Proton donor/acceptor is C204. T205–H206 contributes to the substrate binding site.

Belongs to the aspartate/glutamate racemases family.

It carries out the reaction L-glutamate = D-glutamate. The protein operates within cell wall biogenesis; peptidoglycan biosynthesis. Provides the (R)-glutamate required for cell wall biosynthesis. The sequence is that of Glutamate racemase from Brucella ovis (strain ATCC 25840 / 63/290 / NCTC 10512).